The chain runs to 158 residues: Crossover junction endodeoxyribonuclease RuvC (158 aa).

Catalysis depends on residues D7, E66, and D139. Residues D7, E66, and D139 each contribute to the Mg(2+) site.

Belongs to the RuvC family. As to quaternary structure, homodimer which binds Holliday junction (HJ) DNA. The HJ becomes 2-fold symmetrical on binding to RuvC with unstacked arms; it has a different conformation from HJ DNA in complex with RuvA. In the full resolvosome a probable DNA-RuvA(4)-RuvB(12)-RuvC(2) complex forms which resolves the HJ. Mg(2+) serves as cofactor.

It is found in the cytoplasm. The catalysed reaction is Endonucleolytic cleavage at a junction such as a reciprocal single-stranded crossover between two homologous DNA duplexes (Holliday junction).. Functionally, the RuvA-RuvB-RuvC complex processes Holliday junction (HJ) DNA during genetic recombination and DNA repair. Endonuclease that resolves HJ intermediates. Cleaves cruciform DNA by making single-stranded nicks across the HJ at symmetrical positions within the homologous arms, yielding a 5'-phosphate and a 3'-hydroxyl group; requires a central core of homology in the junction. The consensus cleavage sequence is 5'-(A/T)TT(C/G)-3'. Cleavage occurs on the 3'-side of the TT dinucleotide at the point of strand exchange. HJ branch migration catalyzed by RuvA-RuvB allows RuvC to scan DNA until it finds its consensus sequence, where it cleaves and resolves the cruciform DNA. The sequence is that of Crossover junction endodeoxyribonuclease RuvC from Campylobacter jejuni subsp. jejuni serotype O:6 (strain 81116 / NCTC 11828).